The following is a 608-amino-acid chain: Histone-arginine methyltransferase CARM1 (608 aa).

Ala2 bears the N-acetylalanine mark. Positions 27–138 are interaction with C9orf72; sequence ATVSVFPGAR…GHTLERSVFS (112 aa). The 308-residue stretch at 146 to 453 folds into the SAM-dependent MTase PRMT-type domain; the sequence is AVQYFQFYGY…KRQSYDISIV (308 aa). Gln159, Arg168, Gly192, and Glu214 together coordinate S-adenosyl-L-methionine. The residue at position 216 (Ser216) is a Phosphoserine. A Glycyl lysine isopeptide (Lys-Gly) (interchain with G-Cter in ubiquitin) cross-link involves residue Lys227. S-adenosyl-L-methionine is bound by residues Glu243 and Ser271. A required for nuclear translocation region spans residues 346-379; sequence RILMAKSVKYTVNFLEAKEGDLHRIEIPFKFHML. Residues 499–608 are transactivation domain; that stretch reads TGSTYNLSSG…IPTNTMHYGS (110 aa). Residue Arg550 is modified to Dimethylated arginine.

This sequence belongs to the class I-like SAM-binding methyltransferase superfamily. Protein arginine N-methyltransferase family. Homodimer. Interacts with NR1H4. Interacts with SNRPC. Interacts with the C-terminus of NCOA2/GRIP1, NCO3/ACTR and NCOA1/SRC1. Part of a complex consisting of CARM1, EP300/P300 and NCOA2/GRIP1. Interacts with FLII, TP53, myogenic factor MEF2, EP300/P300, TRIM24, CREBBP and CTNNB1. Interacts with RELA. Identified in a complex containing CARM1, TRIM24 and NCOA2/GRIP1. Interacts with NCOA3/SRC3. Interacts with SKP2. Interacts (via PH domain-like fold) with C9orf72. Interacts with PARP1; promoting PARP1 recruimtent to replication forks. As to quaternary structure, (Microbial infection) Interacts with HTLV-1 protein Tax. Post-translationally, auto-methylated on Arg-550. Methylation enhances transcription coactivator activity. Methylation is required for its role in the regulation of pre-mRNA alternative splicing. In terms of processing, phosphorylation at Ser-216 is strongly increased during mitosis, and decreases rapidly to a very low, basal level after entry into the G1 phase of the cell cycle. Phosphorylation at Ser-216 may promote location in the cytosol. Phosphorylation at Ser-216 interferes with S-adenosyl-L-methionine binding and strongly reduces methyltransferase activity. Ubiquitinated by E3 ubiquitin-protein ligase complex containing FBXO9 at Lys-227; leading to proteasomal degradation. In terms of tissue distribution, overexpressed in prostate adenocarcinomas and high-grade prostatic intraepithelial neoplasia.

It is found in the nucleus. It localises to the cytoplasm. The protein resides in the chromosome. It catalyses the reaction L-arginyl-[protein] + 2 S-adenosyl-L-methionine = N(omega),N(omega)-dimethyl-L-arginyl-[protein] + 2 S-adenosyl-L-homocysteine + 2 H(+). Its activity is regulated as follows. Methylation of H3R17 (H3R17me) by CARM1 is stimulated by preacetylation of H3 'Lys-18' (H3K18ac) H3 'Lys-23' (H3K23ac) by EP300 and blocked by citrullination of H3 'Arg-17' (H3R17ci) by PADI4. Functionally, methylates (mono- and asymmetric dimethylation) the guanidino nitrogens of arginyl residues in several proteins involved in DNA packaging, transcription regulation, pre-mRNA splicing, and mRNA stability. Recruited to promoters upon gene activation together with histone acetyltransferases from EP300/P300 and p160 families, methylates histone H3 at 'Arg-17' (H3R17me), forming mainly asymmetric dimethylarginine (H3R17me2a), leading to activation of transcription via chromatin remodeling. During nuclear hormone receptor activation and TCF7L2/TCF4 activation, acts synergically with EP300/P300 and either one of the p160 histone acetyltransferases NCOA1/SRC1, NCOA2/GRIP1 and NCOA3/ACTR or CTNNB1/beta-catenin to activate transcription. During myogenic transcriptional activation, acts together with NCOA3/ACTR as a coactivator for MEF2C. During monocyte inflammatory stimulation, acts together with EP300/P300 as a coactivator for NF-kappa-B. Acts as a coactivator for PPARG, promotes adipocyte differentiation and the accumulation of brown fat tissue. Plays a role in the regulation of pre-mRNA alternative splicing by methylation of splicing factors. Also seems to be involved in p53/TP53 transcriptional activation. Methylates EP300/P300, both at 'Arg-2142', which may loosen its interaction with NCOA2/GRIP1, and at 'Arg-580' and 'Arg-604' in the KIX domain, which impairs its interaction with CREB and inhibits CREB-dependent transcriptional activation. Also methylates arginine residues in RNA-binding proteins PABPC1, ELAVL1 and ELAV4, which may affect their mRNA-stabilizing properties and the half-life of their target mRNAs. Acts as a transcriptional coactivator of ACACA/acetyl-CoA carboxylase by enriching H3R17 methylation at its promoter, thereby positively regulating fatty acid synthesis. Independently of its methyltransferase activity, involved in replication fork progression: promotes PARP1 recruitment to replication forks, leading to poly-ADP-ribosylation of chromatin at replication forks and reduced fork speed. The protein is Histone-arginine methyltransferase CARM1 (CARM1) of Homo sapiens (Human).